The chain runs to 592 residues: Arginine--tRNA ligase (592 aa).

A 'HIGH' region motif is present at residues 112–122 (VNPNKELHVGH).

The protein belongs to the class-I aminoacyl-tRNA synthetase family. In terms of assembly, monomer.

Its subcellular location is the cytoplasm. It catalyses the reaction tRNA(Arg) + L-arginine + ATP = L-arginyl-tRNA(Arg) + AMP + diphosphate. In Thermus thermophilus (strain ATCC BAA-163 / DSM 7039 / HB27), this protein is Arginine--tRNA ligase.